The sequence spans 223 residues: DNA mismatch repair protein MutH (223 aa).

It belongs to the MutH family.

It is found in the cytoplasm. Functionally, sequence-specific endonuclease that cleaves unmethylated GATC sequences. It is involved in DNA mismatch repair. This is DNA mismatch repair protein MutH from Shewanella sp. (strain MR-4).